Consider the following 597-residue polypeptide: MNVGVKVREISTGSIGVIEKGNNQNGFFVNFGSRKNWKRNNEVEVIQNTIDNSNGKQSTTPKPIAQQQQQQQPPPQQSQQQPPQPLKPIPATRPVPTIPKVQSEDPGPRFGNFTLPTTNSSTKYSTLPSRQFFEVSSSPGDENGTFKRSAAPPPPSSLSSNQNGSNLNKVQSPSRPSIPSFEPPTQQPTQPLQKSPRNVPIVPKRTNPSPPSPPLQSPQPTPQQQPPPLKPIPQPQQQQQQQQQQQQQQQQQQQQQQQQQQQQQQPPPLKPIPQPQQSQPTQPIKSQIQIPITNTNGNTNGHSSLVEKSPRNNESTATTATTKDMWNIDYKELKFVGNEIGSGKYGSVSLGYWLGTPVAIKKLHENNEETEILVQRELQILKEIRHPQIVQFLGVSRNEKDEIHIITEFMDGGDLFDALIFGDIPLTWKEKLRISLDIAQSCRFLHARGILHRDLKSQNILLSTNRRAKLCDLGLARMFEERINKRYTCVGTEIWMAPEVCLDQSYSTAVDVFSFGIVLVEIITEKIPDERFPQHRFQFDAPAFLKKVPKECPPDFSKLCVDCTKYNPKERPSFIKVLDTIQNIYDSLPDDDEENYD.

The span at 49–61 shows a compositional bias: polar residues; that stretch reads TIDNSNGKQSTTP. Positions 49 to 320 are disordered; the sequence is TIDNSNGKQS…RNNESTATTA (272 aa). A compositionally biased stretch (pro residues) spans 72 to 97; sequence QPPPQQSQQQPPQPLKPIPATRPVPT. Residues 114 to 140 show a composition bias toward polar residues; sequence TLPTTNSSTKYSTLPSRQFFEVSSSPG. Residues 157–168 show a composition bias toward low complexity; it reads SLSSNQNGSNLN. A compositionally biased stretch (pro residues) spans 208–234; it reads PSPPSPPLQSPQPTPQQQPPPLKPIPQ. A compositionally biased stretch (low complexity) spans 235–264; that stretch reads PQQQQQQQQQQQQQQQQQQQQQQQQQQQQQ. Over residues 265–274 the composition is skewed to pro residues; sequence QPPPLKPIPQ. Residues 275–301 are compositionally biased toward low complexity; sequence PQQSQPTQPIKSQIQIPITNTNGNTNG. The region spanning 334–585 is the Protein kinase domain; sequence KFVGNEIGSG…KVLDTIQNIY (252 aa). ATP is bound by residues 340–348 and Lys-361; that span reads IGSGKYGSV. The active-site Proton acceptor is Asp-454.

The protein belongs to the protein kinase superfamily. TKL Ser/Thr protein kinase family.

The enzyme catalyses L-seryl-[protein] + ATP = O-phospho-L-seryl-[protein] + ADP + H(+). The catalysed reaction is L-threonyl-[protein] + ATP = O-phospho-L-threonyl-[protein] + ADP + H(+). The sequence is that of Probable serine/threonine-protein kinase DDB_G0281745 from Dictyostelium discoideum (Social amoeba).